A 434-amino-acid polypeptide reads, in one-letter code: Gamma-glutamyl phosphate reductase (434 aa).

The protein belongs to the gamma-glutamyl phosphate reductase family.

Its subcellular location is the cytoplasm. It catalyses the reaction L-glutamate 5-semialdehyde + phosphate + NADP(+) = L-glutamyl 5-phosphate + NADPH + H(+). Its pathway is amino-acid biosynthesis; L-proline biosynthesis; L-glutamate 5-semialdehyde from L-glutamate: step 2/2. Catalyzes the NADPH-dependent reduction of L-glutamate 5-phosphate into L-glutamate 5-semialdehyde and phosphate. The product spontaneously undergoes cyclization to form 1-pyrroline-5-carboxylate. This chain is Gamma-glutamyl phosphate reductase, found in Nostoc sp. (strain PCC 7120 / SAG 25.82 / UTEX 2576).